A 223-amino-acid polypeptide reads, in one-letter code: UPF0641 membrane protein PJ4664.05 (223 aa).

A run of 5 helical transmembrane segments spans residues 10 to 30 (FNSF…FNWI), 49 to 69 (LTVL…FSDI), 81 to 101 (ILLY…WSIV), 146 to 166 (LSIG…MLWV), and 190 to 210 (TIFY…LKMV).

The protein belongs to the UPF0641 family.

It is found in the endoplasmic reticulum membrane. This is UPF0641 membrane protein PJ4664.05 from Schizosaccharomyces pombe (strain 972 / ATCC 24843) (Fission yeast).